Reading from the N-terminus, the 728-residue chain is 1,4-alpha-glucan branching enzyme GlgB (728 aa).

The active-site Nucleophile is the aspartate 405. The active-site Proton donor is glutamate 458.

It belongs to the glycosyl hydrolase 13 family. GlgB subfamily. As to quaternary structure, monomer.

It carries out the reaction Transfers a segment of a (1-&gt;4)-alpha-D-glucan chain to a primary hydroxy group in a similar glucan chain.. It participates in glycan biosynthesis; glycogen biosynthesis. Its function is as follows. Catalyzes the formation of the alpha-1,6-glucosidic linkages in glycogen by scission of a 1,4-alpha-linked oligosaccharide from growing alpha-1,4-glucan chains and the subsequent attachment of the oligosaccharide to the alpha-1,6 position. This is 1,4-alpha-glucan branching enzyme GlgB from Escherichia coli O157:H7.